The following is a 453-amino-acid chain: Ribosome biogenesis protein SSF2 (453 aa).

Residues 1 to 11 (MAKRRQKKRTH) are compositionally biased toward basic residues. 3 disordered regions span residues 1–22 (MAKR…ERDI), 275–327 (KAKH…KAIK), and 373–453 (AKMR…SEVE). Residues 26–348 (MVIRVGQTSL…LVKIEDGICS (323 aa)) form the Brix domain. Residues 373–398 (AKMRLKEQRRKEQEENIAKKKAVKDA) are compositionally biased toward basic and acidic residues. A compositionally biased stretch (basic residues) spans 399-409 (KKQRKLERRKA). The segment covering 440-453 (VPEDLDSDLFSEVE) has biased composition (acidic residues).

As to quaternary structure, part of a complex that includes BRX1, RPF1, RPF2 and SSF1 or SSF2.

The protein localises to the nucleus. Its subcellular location is the nucleolus. Its function is as follows. Required for biogenesis of the 60S ribosomal subunit. This is Ribosome biogenesis protein SSF2 (SSF2) from Saccharomyces cerevisiae (strain ATCC 204508 / S288c) (Baker's yeast).